The sequence spans 433 residues: 3-phosphoshikimate 1-carboxyvinyltransferase (433 aa).

The 3-phosphoshikimate site is built by Lys-22, Ser-23, and Arg-27. Lys-22 lines the phosphoenolpyruvate pocket. Residues Gly-95 and Arg-123 each coordinate phosphoenolpyruvate. Residues Ser-167, Gln-169, Asp-315, and Lys-342 each coordinate 3-phosphoshikimate. Gln-169 contacts phosphoenolpyruvate. Asp-315 acts as the Proton acceptor in catalysis. Arg-346 and Arg-387 together coordinate phosphoenolpyruvate.

This sequence belongs to the EPSP synthase family. In terms of assembly, monomer.

It localises to the cytoplasm. It carries out the reaction 3-phosphoshikimate + phosphoenolpyruvate = 5-O-(1-carboxyvinyl)-3-phosphoshikimate + phosphate. It participates in metabolic intermediate biosynthesis; chorismate biosynthesis; chorismate from D-erythrose 4-phosphate and phosphoenolpyruvate: step 6/7. Catalyzes the transfer of the enolpyruvyl moiety of phosphoenolpyruvate (PEP) to the 5-hydroxyl of shikimate-3-phosphate (S3P) to produce enolpyruvyl shikimate-3-phosphate and inorganic phosphate. The sequence is that of 3-phosphoshikimate 1-carboxyvinyltransferase from Legionella pneumophila subsp. pneumophila (strain Philadelphia 1 / ATCC 33152 / DSM 7513).